Consider the following 120-residue polypeptide: Small ribosomal subunit protein uS13 (120 aa).

The segment at 94 to 120 (GLPLRGQRTRTNARTRKGPRKAIAGKK) is disordered.

Belongs to the universal ribosomal protein uS13 family. As to quaternary structure, part of the 30S ribosomal subunit. Forms a loose heterodimer with protein S19. Forms two bridges to the 50S subunit in the 70S ribosome.

Located at the top of the head of the 30S subunit, it contacts several helices of the 16S rRNA. In the 70S ribosome it contacts the 23S rRNA (bridge B1a) and protein L5 of the 50S subunit (bridge B1b), connecting the 2 subunits; these bridges are implicated in subunit movement. Contacts the tRNAs in the A and P-sites. In Azoarcus sp. (strain BH72), this protein is Small ribosomal subunit protein uS13.